The following is a 424-amino-acid chain: Lipoamide acyltransferase component of branched-chain alpha-keto acid dehydrogenase complex (424 aa).

In terms of domain architecture, Lipoyl-binding spans 3-78 (IEQMTMPQLG…QVGEMICKIE (76 aa)). K44 carries the N6-lipoyllysine modification. The tract at residues 82-115 (ANPAEQKQEQPAASEAAENPVAKSAGAADQPNKK) is disordered. The Peripheral subunit-binding (PSBD) domain maps to 116–153 (RYSPAVLRLAGEHGIDLDQVTGTGAGGRITRKDIQRLI). Residues 154 to 193 (ETGGVQEQNPEELKTAAPAPKSASKPEPKEETSYPASAAG) form a disordered region. Catalysis depends on residues H395 and D399.

The protein belongs to the 2-oxoacid dehydrogenase family. As to quaternary structure, forms a 24-polypeptide structural core with octahedral symmetry. The cofactor is (R)-lipoate.

It carries out the reaction N(6)-[(R)-dihydrolipoyl]-L-lysyl-[protein] + 2-methylpropanoyl-CoA = N(6)-[(R)-S(8)-2-methylpropanoyldihydrolipoyl]-L-lysyl-[protein] + CoA. In terms of biological role, the branched-chain alpha-keto dehydrogenase complex catalyzes the overall conversion of alpha-keto acids to acyl-CoA and CO(2). It contains multiple copies of three enzymatic components: branched-chain alpha-keto acid decarboxylase (E1), lipoamide acyltransferase (E2) and lipoamide dehydrogenase (E3). The polypeptide is Lipoamide acyltransferase component of branched-chain alpha-keto acid dehydrogenase complex (bfmBB) (Bacillus subtilis (strain 168)).